A 445-amino-acid chain; its full sequence is V-type proton ATPase subunit H (445 aa).

Belongs to the V-ATPase H subunit family. V-ATPase is a heteromultimeric enzyme composed of a peripheral catalytic V1 complex (components A to H) attached to an integral membrane V0 proton pore complex (components: a, c, c', c'' and d).

In terms of biological role, subunit of the peripheral V1 complex of vacuolar ATPase. Subunit H activates the ATPase activity of the enzyme and couples ATPase activity to proton flow. Vacuolar ATPase is responsible for acidifying a variety of intracellular compartments in eukaryotic cells, thus providing most of the energy required for transport processes in the vacuolar system. In Dictyostelium discoideum (Social amoeba), this protein is V-type proton ATPase subunit H (vatH).